Here is a 320-residue protein sequence, read N- to C-terminus: MIKKIGVLTSGGDAPGMNAAIRGVVRAALTEGLEVMGIYDGYLGLYEDRMVQLDRYSVSDMINRGGTFLGSARFPEFRDENIRAVAIENLKKRGIDALVVIGGDGSYMGAKRLTEIGFPCIGLPGTIDNDIKGTDYTIGYFTALGTVVEAIDRLRDTSSSHQRISIVEVMGRYCGDLTLAAAIAGGCEFIVVPEVEFNREDLVAEIKAGIAKGKKHAIVAITEHMCDVDELAHFIEKETGRETRATVLGHIQRGGSPVPYDRILASRMGAYAIDLLLEGHGGRCVGIQNEQLVHHDIIDAIENMKRPFKSDWMECAKKLY.

G12 is a binding site for ATP. ADP-binding positions include 22-26 and 55-60; these read RGVVR and RYSVSD. Residues 73-74 and 103-106 each bind ATP; these read RF and GDGS. D104 is a Mg(2+) binding site. 126-128 is a binding site for substrate; the sequence is TID. Residue D128 is the Proton acceptor of the active site. R155 serves as a coordination point for ADP. Substrate is bound by residues R163 and 170–172; that span reads MGR. ADP-binding positions include 186 to 188, K212, and 214 to 216; these read GCE and KKH. Substrate contacts are provided by residues E223, R244, and 250-253; that span reads HIQR.

It belongs to the phosphofructokinase type A (PFKA) family. ATP-dependent PFK group I subfamily. Prokaryotic clade 'B1' sub-subfamily. As to quaternary structure, homotetramer. The cofactor is Mg(2+).

It is found in the cytoplasm. It carries out the reaction beta-D-fructose 6-phosphate + ATP = beta-D-fructose 1,6-bisphosphate + ADP + H(+). The protein operates within carbohydrate degradation; glycolysis; D-glyceraldehyde 3-phosphate and glycerone phosphate from D-glucose: step 3/4. Its activity is regulated as follows. Allosterically activated by ADP and other diphosphonucleosides, and allosterically inhibited by phosphoenolpyruvate. Functionally, catalyzes the phosphorylation of D-fructose 6-phosphate to fructose 1,6-bisphosphate by ATP, the first committing step of glycolysis. The sequence is that of ATP-dependent 6-phosphofructokinase from Salmonella gallinarum (strain 287/91 / NCTC 13346).